Here is a 201-residue protein sequence, read N- to C-terminus: Dermatopontin (201 aa).

The N-terminal stretch at 1–18 is a signal peptide; the sequence is MDLSLLWVLLPLVTMAWG. Pyrrolidone carboxylic acid is present on Gln-19. A Sulfotyrosine modification is found at Tyr-23. Repeat copies occupy residues 26–79, 70–75, 80–135, and 125–130. The interval 26–186 is 2 X 53-55 AA tandem repeats; sequence PYQQYHDYSD…AVERDRQWKF (161 aa). Intrachain disulfides connect Cys-50-Cys-77, Cys-90-Cys-132, Cys-106-Cys-133, Cys-139-Cys-196, and Cys-143-Cys-189. The segment at 70–186 is 3 X 6 AA repeats of D-R-[EQ]-W-[NQK]-[FY]; it reads DRQWNYACMP…AVERDRQWKF (117 aa). Sulfotyrosine occurs at positions 162, 164, 166, and 167. One copy of the 3-3 repeat lies at 181-186; the sequence is DRQWKF. The residue at position 194 (Tyr-194) is a Sulfotyrosine.

This sequence belongs to the dermatopontin family. As to quaternary structure, interacts with TGFB1, DCN and collagen. Sulfated on tyrosine residue(s). Expressed in fibroblasts, heart, skeletal muscle, brain and pancreas. Expressed at an intermediate level in lung and kidney, and at a low level in liver and placenta. Expressed at a lower level in fibroblasts from hypertrophic scar lesional skin and in fibroblasts from patients with systemic sclerosis than in normal skin fibroblasts.

The protein localises to the secreted. It is found in the extracellular space. It localises to the extracellular matrix. Seems to mediate adhesion by cell surface integrin binding. May serve as a communication link between the dermal fibroblast cell surface and its extracellular matrix environment. Enhances TGFB1 activity. Inhibits cell proliferation. Accelerates collagen fibril formation, and stabilizes collagen fibrils against low-temperature dissociation. The protein is Dermatopontin (DPT) of Homo sapiens (Human).